Here is a 75-residue protein sequence, read N- to C-terminus: Large ribosomal subunit protein bL31 (75 aa).

Zn(2+)-binding residues include cysteine 16, cysteine 18, cysteine 37, and cysteine 40.

This sequence belongs to the bacterial ribosomal protein bL31 family. Type A subfamily. In terms of assembly, part of the 50S ribosomal subunit. Requires Zn(2+) as cofactor.

In terms of biological role, binds the 23S rRNA. The protein is Large ribosomal subunit protein bL31 of Legionella pneumophila (strain Paris).